Here is a 371-residue protein sequence, read N- to C-terminus: Ferrochelatase (371 aa).

The Fe cation site is built by H218 and E299.

This sequence belongs to the ferrochelatase family.

It is found in the cytoplasm. It carries out the reaction heme b + 2 H(+) = protoporphyrin IX + Fe(2+). The protein operates within porphyrin-containing compound metabolism; protoheme biosynthesis; protoheme from protoporphyrin-IX: step 1/1. Catalyzes the ferrous insertion into protoporphyrin IX. The sequence is that of Ferrochelatase from Ralstonia pickettii (strain 12J).